We begin with the raw amino-acid sequence, 167 residues long: Outer envelope pore protein 21A, chloroplastic (167 aa).

Topologically, residues 1-21 (METSLRYATNSRSLKIHAKEK) are cytoplasmic. A beta stranded membrane pass occupies residues 22 to 31 (FPVNSKTRLQ). The Chloroplast intermembrane segment spans residues 32-55 (LHGELDTGAGVPSYFCAMIRYFFH). A beta stranded membrane pass occupies residues 56 to 65 (EASTNLGVGL). Residues 66–71 (HYDKRE) lie on the Cytoplasmic side of the membrane. The beta stranded transmembrane segment at 72–81 (KLRCLVRGKK) threads the bilayer. Residues 82–87 (KFPVIT) lie on the Chloroplast intermembrane side of the membrane. Residues 88–97 (DEVVTFNIKG) form a beta stranded membrane-spanning segment. Residues 98 to 110 (RCDFDQDLVQRNA) lie on the Cytoplasmic side of the membrane. The beta stranded transmembrane segment at 111–120 (KGAAEFDWNI) threads the bilayer. Over 121 to 127 (WKFQKDQ) the chain is Chloroplast intermembrane. Residues 128–137 (DLRLRIGYEM) form a beta stranded membrane-spanning segment. Residues 138–142 (FEKVP) are Cytoplasmic-facing. Residues 143–152 (YMQIRENNWT) form a beta stranded membrane-spanning segment. Residues 153–158 (FNTNLK) lie on the Chloroplast intermembrane side of the membrane. Residues 159 to 167 (GKWNVRYDL) traverse the membrane as a beta stranded segment.

Belongs to the plastid outer envelope porin OEP21 (TC 1.B.29) family.

It is found in the plastid. It localises to the etioplast membrane. Its subcellular location is the chloroplast outer membrane. Voltage-dependent rectifying anion channel that facilitates the translocation between chloroplast and cytoplasm of phosphorylated carbohydrates such as triosephosphate, 3-phosphoglycerate and inorganic phosphate (Pi) depending of ATP to triosephosphate ratio in the plastidial intermembrane space; in high triosephosphate/ATP conditions (e.g. photosynthesis), export of triosphosphate from chloroplast (outward rectifying channels), but in high ATP/triosephosphate conditions (e.g. dark phase), import of phosphosolutes (inward rectifying channels). This Arabidopsis thaliana (Mouse-ear cress) protein is Outer envelope pore protein 21A, chloroplastic (OEP21A).